A 314-amino-acid chain; its full sequence is Mycothiol acetyltransferase (314 aa).

E39 serves as a coordination point for 1D-myo-inositol 2-(L-cysteinylamino)-2-deoxy-alpha-D-glucopyranoside. Residue 80-82 (LTA) coordinates acetyl-CoA. Residues 159 to 313 (FVCRRFDPIS…PTGELGHEPP (155 aa)) form the N-acetyltransferase domain. The 1D-myo-inositol 2-(L-cysteinylamino)-2-deoxy-alpha-D-glucopyranoside site is built by E186, K228, and E237. Acetyl-CoA contacts are provided by residues 241-243 (LGV) and 248-254 (QGQGVGR). Y275 contributes to the 1D-myo-inositol 2-(L-cysteinylamino)-2-deoxy-alpha-D-glucopyranoside binding site.

Belongs to the acetyltransferase family. MshD subfamily. Monomer.

It carries out the reaction 1D-myo-inositol 2-(L-cysteinylamino)-2-deoxy-alpha-D-glucopyranoside + acetyl-CoA = mycothiol + CoA + H(+). Catalyzes the transfer of acetyl from acetyl-CoA to desacetylmycothiol (Cys-GlcN-Ins) to form mycothiol. In Jonesia denitrificans (strain ATCC 14870 / DSM 20603 / BCRC 15368 / CIP 55.134 / JCM 11481 / NBRC 15587 / NCTC 10816 / Prevot 55134) (Listeria denitrificans), this protein is Mycothiol acetyltransferase.